Reading from the N-terminus, the 354-residue chain is Major egg antigen (354 aa).

The tract at residues methionine 1–phenylalanine 21 is disordered. SHSP domains follow at residues serine 122–arginine 233 and alanine 251–histidine 354.

The protein belongs to the small heat shock protein (HSP20) family.

In Schistosoma mansoni (Blood fluke), this protein is Major egg antigen.